A 393-amino-acid polypeptide reads, in one-letter code: FAD-dependent monooxygenase dbaB (393 aa).

The first 23 residues, methionine 1–alanine 23, serve as a signal peptide directing secretion. FAD-binding residues include glutamate 37 and arginine 107. Asparagine 128 carries N-linked (GlcNAc...) asparagine glycosylation. The active site involves tyrosine 221. Residue asparagine 233 is glycosylated (N-linked (GlcNAc...) asparagine). Position 320 (aspartate 320) interacts with FAD.

The protein belongs to the paxM FAD-dependent monooxygenase family. FAD serves as cofactor.

It participates in secondary metabolite biosynthesis. In terms of biological role, FAD-dependent monooxygenase; part of the gene cluster that mediates the biosynthesis of the antibiotic 2,4-dihydroxy-3-methyl-6-(2-oxopropyl)benzaldehyde (DHMBA) and its derivatives. The direct non-reducing polyketide synthase dbaI product is 2,4-dihydroxy-3-methyl-6-(2-oxopropyl)benzaldehyde (DHMBA), produced by condensation of one acetyl-CoA starter unit with 4 malonyl-CoA units and one methylation step. The FAD-dependent monooxygenase dbaH is responsible for the synthesis of yellow pigments derived from the oxidation of DHMBA. The roles of dbaB, C, E and F have still to be determined. The sequence is that of FAD-dependent monooxygenase dbaB from Emericella nidulans (strain FGSC A4 / ATCC 38163 / CBS 112.46 / NRRL 194 / M139) (Aspergillus nidulans).